The following is a 575-amino-acid chain: Intermediate filament protein ifa-1 (575 aa).

Disordered regions lie at residues 1–30 and 45–72; these read MMEI…TGNV and SGAG…EKKE. Residues 1 to 72 form a head region; the sequence is MMEITRETMS…RDSREREKKE (72 aa). The segment covering 7 to 17 has biased composition (polar residues); the sequence is ETMSFTSTTPS. Residues 63–72 show a composition bias toward basic and acidic residues; sequence RDSREREKKE. The region spanning 69–422 is the IF rod domain; sequence EKKEMSDLND…KMLEGEENRA (354 aa). The coil 1A stretch occupies residues 73 to 104; sequence MSDLNDRLASYIEKVRFLEAQNRKLAADLDAL. Residues 105-118 form a linker 1 region; that stretch reads RSKWGKDTHNIRNM. The interval 119-256 is coil 1B; the sequence is YEGELVDAQK…RVHDNEIKEL (138 aa). A linker 12 region spans residues 257–274; the sequence is QTLASRDTTPENREFFKN. Residues 275-422 are coil 2; it reads ELSSAIRDIR…KMLEGEENRA (148 aa). Residues 423–572 are tail; sequence GLKQLVEQVV…EERATHIQRQ (150 aa). The LTD domain occupies 455–572; it reads SRQSFQRSAK…EERATHIQRQ (118 aa).

It belongs to the intermediate filament family. In terms of assembly, forms some heteromeric filaments with ifb-1. As to expression, isoform d is abundantly expressed in the marginal cells of the pharynx, forming apicobasally oriented thick filament bundles that are attached to the apical and basal plasma membrane by hemi-adherens junctions. Expression of isoform c is also seen in the excretory cells and in the uterus. Isoform c is detectable in the amphid sensory neurins and the pharyngeal-intestinal valve. Both isoform c and isoform d are expressed in the rectum and vulva and in some neurons of the tail. In larvae, expression is seen in the excretory cell, the vulva, the rectum and in the thick filament bundles of the pharynx. Expression in pharynx begins in late embryos.

The protein localises to the cytoplasm. In terms of biological role, cytoplasmic intermediate filaments make up the structural component of the cytoskeleton providing mechanical strength to cells. Essential protein required during embryogenesis especially for survival past the L1 larva stage, involved in intestine morphogenesis. This is Intermediate filament protein ifa-1 (ifa-1) from Caenorhabditis elegans.